We begin with the raw amino-acid sequence, 210 residues long: MSSIFGKLREFVGFGEPTGYDYDYDEMEGDDYQGLYPAEPAQSLPTRSEEPHPRPSEPEMRSPVNTSAVTSTAMNPPMNQSMNNVVGMPGSGKWWGAVAEVIVMEPRSFEEMPQVIQALRERKSVVLNLTMMEPDQAQRAVDFVAGATYTIDGHQERIGESIFLFTPSCVQVSTQAGGQSHTLRDIPQAQIHTRPPAPAWTAEPLSRIAQ.

The interval 13–78 (GFGEPTGYDY…VTSTAMNPPM (66 aa)) is disordered. Residues 22–31 (YDYDEMEGDD) are compositionally biased toward acidic residues. The segment covering 47–60 (RSEEPHPRPSEPEM) has biased composition (basic and acidic residues). Residues 64–78 (VNTSAVTSTAMNPPM) are compositionally biased toward polar residues.

Belongs to the SepF family. Homodimer. Interacts with FtsZ.

It localises to the cytoplasm. Functionally, cell division protein that is part of the divisome complex and is recruited early to the Z-ring. Probably stimulates Z-ring formation, perhaps through the cross-linking of FtsZ protofilaments. Its function overlaps with FtsA. This chain is Cell division protein SepF, found in Cyanothece sp. (strain PCC 7425 / ATCC 29141).